A 101-amino-acid chain; its full sequence is MPKEKDGVIYTINLRRLYWGRRSNRAKRAVRMVREFVARHFGVEPEDVKIDNTVNNYLWSGSITKPPARVQVYVTVKTESGEEGERKVAYVTLANVKDVED.

This sequence belongs to the eukaryotic ribosomal protein eL31 family.

In Ignicoccus hospitalis (strain KIN4/I / DSM 18386 / JCM 14125), this protein is Large ribosomal subunit protein eL31.